Consider the following 123-residue polypeptide: Ribosome-binding factor A (123 aa).

It belongs to the RbfA family. As to quaternary structure, monomer. Binds 30S ribosomal subunits, but not 50S ribosomal subunits or 70S ribosomes.

The protein resides in the cytoplasm. Its function is as follows. One of several proteins that assist in the late maturation steps of the functional core of the 30S ribosomal subunit. Associates with free 30S ribosomal subunits (but not with 30S subunits that are part of 70S ribosomes or polysomes). Required for efficient processing of 16S rRNA. May interact with the 5'-terminal helix region of 16S rRNA. This Variovorax paradoxus (strain S110) protein is Ribosome-binding factor A.